We begin with the raw amino-acid sequence, 246 residues long: 14-3-3 protein beta/alpha (246 aa).

Position 1 is an N-acetylmethionine (Met1). Thr2 bears the N-acetylthreonine; in 14-3-3 protein beta/alpha, N-terminally processed mark. Thr2 carries the phosphothreonine modification. Lys5 is subject to N6-acetyllysine. At Lys51 the chain carries N6-acetyllysine; alternate. Residue Lys51 forms a Glycyl lysine isopeptide (Lys-Gly) (interchain with G-Cter in SUMO2); alternate linkage. A Phosphoserine modification is found at Ser60. Lys70 bears the N6-acetyllysine mark. 2 positions are modified to 3'-nitrotyrosine: Tyr84 and Tyr106. Lys117 carries the post-translational modification N6-acetyllysine. Residues Ser186 and Ser232 each carry the phosphoserine modification.

It belongs to the 14-3-3 family. In terms of assembly, homodimer. Interacts with SAMSN1 and PRKCE. Interacts with AKAP13. Interacts with SSH1 and TORC2/CRTC2. Interacts with ABL1; the interaction results in cytoplasmic location of ABL1 and inhibition of cABL-mediated apoptosis. Interacts with ROR2 (dimer); the interaction results in phosphorylation of YWHAB on tyrosine residues. Interacts with GAB2. Interacts with YAP1 (phosphorylated form). Interacts with the phosphorylated (by AKT1) form of SRPK2. Interacts with PKA-phosphorylated AANAT. Interacts with MYO1C. Interacts with SIRT2. Interacts with the 'Thr-369' phosphorylated form of DAPK2. Interacts with PI4KB, TBC1D22A and TBC1D22B. Interacts with the 'Ser-1134' and 'Ser-1161' phosphorylated form of SOS1. Interacts (via phosphorylated form) with YWHAB; this interaction occurs in a protein kinase AKT1-dependent manner. Interacts with SLITRK1. Interacts with SYNPO2 (phosphorylated form); YWHAB competes with ACTN2 for interaction with SYNPO2. Interacts with RIPOR2 (via phosphorylated form); this interaction occurs in a chemokine-dependent manner and does not compete for binding of RIPOR2 with RHOA nor blocks inhibition of RIPOR2-mediated RHOA activity. Interacts with MARK2 and MARK3. Interacts with TESK1; the interaction is dependent on the phosphorylation of TESK1 'Ser-439' and inhibits TESK1 kinase activity. Interacts with MEFV. Interacts with HDAC4. Interacts with ADAM22 (via C-terminus). Post-translationally, the alpha, brain-specific form differs from the beta form in being phosphorylated. Phosphorylated on Ser-60 by protein kinase C delta type catalytic subunit in a sphingosine-dependent fashion.

It localises to the cytoplasm. The protein resides in the melanosome. Functionally, adapter protein implicated in the regulation of a large spectrum of both general and specialized signaling pathways. Binds to a large number of partners, usually by recognition of a phosphoserine or phosphothreonine motif. Binding generally results in the modulation of the activity of the binding partner. Negative regulator of osteogenesis. Blocks the nuclear translocation of the phosphorylated form (by AKT1) of SRPK2 and antagonizes its stimulatory effect on cyclin D1 expression resulting in blockage of neuronal apoptosis elicited by SRPK2. Negative regulator of signaling cascades that mediate activation of MAP kinases via AKAP13. The sequence is that of 14-3-3 protein beta/alpha (YWHAB) from Bos taurus (Bovine).